Here is a 557-residue protein sequence, read N- to C-terminus: Jerky protein (557 aa).

The HTH psq-type domain occupies 11 to 62 (KGEKRKRVVLTLKEKIDICTRLERGESRKALMQEYNVGMSTLYDIKAHKAQL). 2 DNA-binding regions (H-T-H motif) span residues 38 to 58 (RKAL…IKAH) and 110 to 142 (PMLI…FKAR). Residues 77–149 (QRRTLHTPKL…KARHGIKKLD (73 aa)) enclose the HTH CENPB-type domain. One can recognise a DDE-1 domain in the interval 213–382 (KDRLTVLMCA…VPSQVFQRAW (170 aa)).

This sequence belongs to the tigger transposable element derived protein family. Brain; highest in the temporal and brainstem regions.

Its subcellular location is the nucleus. In terms of biological role, may bind DNA. This is Jerky protein from Mus musculus (Mouse).